A 500-amino-acid polypeptide reads, in one-letter code: Glutamyl-tRNA(Gln) amidotransferase subunit A (500 aa).

Catalysis depends on charge relay system residues lysine 81 and serine 161. Residue serine 185 is the Acyl-ester intermediate of the active site.

This sequence belongs to the amidase family. GatA subfamily. In terms of assembly, heterotrimer of A, B and C subunits.

The catalysed reaction is L-glutamyl-tRNA(Gln) + L-glutamine + ATP + H2O = L-glutaminyl-tRNA(Gln) + L-glutamate + ADP + phosphate + H(+). In terms of biological role, allows the formation of correctly charged Gln-tRNA(Gln) through the transamidation of misacylated Glu-tRNA(Gln) in organisms which lack glutaminyl-tRNA synthetase. The reaction takes place in the presence of glutamine and ATP through an activated gamma-phospho-Glu-tRNA(Gln). This is Glutamyl-tRNA(Gln) amidotransferase subunit A from Rhodospirillum rubrum (strain ATCC 11170 / ATH 1.1.1 / DSM 467 / LMG 4362 / NCIMB 8255 / S1).